A 192-amino-acid chain; its full sequence is Large ribosomal subunit protein uL18 (192 aa).

The protein belongs to the universal ribosomal protein uL18 family. In terms of assembly, part of the 50S ribosomal subunit. Contacts the 5S and 23S rRNAs.

Functionally, this is one of the proteins that bind and probably mediate the attachment of the 5S RNA into the large ribosomal subunit, where it forms part of the central protuberance. The protein is Large ribosomal subunit protein uL18 of Methanothermobacter thermautotrophicus (strain ATCC 29096 / DSM 1053 / JCM 10044 / NBRC 100330 / Delta H) (Methanobacterium thermoautotrophicum).